Here is a 119-residue protein sequence, read N- to C-terminus: V-type proton ATPase subunit F (119 aa).

The protein belongs to the V-ATPase F subunit family. In terms of assembly, V-ATPase is a heteromultimeric enzyme composed of a peripheral catalytic V1 complex (components A to H) attached to an integral membrane V0 proton pore complex (components: a, c, c', c'', d, e, f and VOA1).

It is found in the vacuole membrane. Functionally, subunit of the V1 complex of vacuolar(H+)-ATPase (V-ATPase), a multisubunit enzyme composed of a peripheral complex (V1) that hydrolyzes ATP and a membrane integral complex (V0) that translocates protons. V-ATPase is responsible for acidifying and maintaining the pH of intracellular compartments. This chain is V-type proton ATPase subunit F (VMA7), found in Vanderwaltozyma polyspora (strain ATCC 22028 / DSM 70294 / BCRC 21397 / CBS 2163 / NBRC 10782 / NRRL Y-8283 / UCD 57-17) (Kluyveromyces polysporus).